Here is a 256-residue protein sequence, read N- to C-terminus: Acetyl-coenzyme A carboxylase carboxyl transferase subunit alpha (256 aa).

A CoA carboxyltransferase C-terminal domain is found at 1-236 (MTDVSRVLKE…KANLIEQITS (236 aa)).

Belongs to the AccA family. Acetyl-CoA carboxylase is a heterohexamer composed of biotin carboxyl carrier protein (AccB), biotin carboxylase (AccC) and two subunits each of ACCase subunit alpha (AccA) and ACCase subunit beta (AccD).

It localises to the cytoplasm. It catalyses the reaction N(6)-carboxybiotinyl-L-lysyl-[protein] + acetyl-CoA = N(6)-biotinyl-L-lysyl-[protein] + malonyl-CoA. It functions in the pathway lipid metabolism; malonyl-CoA biosynthesis; malonyl-CoA from acetyl-CoA: step 1/1. Component of the acetyl coenzyme A carboxylase (ACC) complex. First, biotin carboxylase catalyzes the carboxylation of biotin on its carrier protein (BCCP) and then the CO(2) group is transferred by the carboxyltransferase to acetyl-CoA to form malonyl-CoA. The sequence is that of Acetyl-coenzyme A carboxylase carboxyl transferase subunit alpha from Streptococcus pyogenes serotype M2 (strain MGAS10270).